Reading from the N-terminus, the 290-residue chain is Chloride intracellular channel exc-4 (290 aa).

Residues 37 to 57 (LFCQEFWMELYALYEIGVARV) traverse the membrane as a helical segment.

This sequence belongs to the chloride channel CLIC family. As to quaternary structure, monomer. Expressed in the secretory system, hypodermis, vulva, pharyngeal muscle, rectal gland, tubular rectal epithelium cells, and tubular neuronal support cells in the head and tail.

It localises to the cytoplasm. Its subcellular location is the membrane. Functionally, may insert into membranes and form chloride ion channels. Involved in the formation of the excretory canal. Required to prevent cystic lumenal expansions in the excretory cell. Not required for formation of the initial tube, but is required for regulating the size of the tube lumen as it grows. The sequence is that of Chloride intracellular channel exc-4 (exc-4) from Caenorhabditis elegans.